The chain runs to 50 residues: Small nuclear ribonucleoprotein Sm D2 (50 aa).

The interval 1 to 36 (MSLLNKPKSEMTPEELQKREEEEFNTGPLSVXTQSX) is disordered. The residue at position 2 (Ser2) is an N-acetylserine. Residues Lys6 and Lys8 each participate in a glycyl lysine isopeptide (Lys-Gly) (interchain with G-Cter in SUMO2) cross-link. Residues 7–21 (PKSEMTPEELQKREE) are compositionally biased toward basic and acidic residues. Ser9 carries the phosphoserine modification. A Phosphothreonine modification is found at Thr12.

The protein belongs to the snRNP core protein family. As to quaternary structure, core component of the spliceosomal U1, U2, U4 and U5 small nuclear ribonucleoproteins (snRNPs), the building blocks of the spliceosome. Most spliceosomal snRNPs contain a common set of Sm proteins, SNRPB, SNRPD1, SNRPD2, SNRPD3, SNRPE, SNRPF and SNRPG that assemble in a heptameric protein ring on the Sm site of the small nuclear RNA to form the core snRNP. Component of the U1 snRNP. The U1 snRNP is composed of the U1 snRNA and the 7 core Sm proteins SNRPB, SNRPD1, SNRPD2, SNRPD3, SNRPE, SNRPF and SNRPG, and at least three U1 snRNP-specific proteins SNRNP70/U1-70K, SNRPA/U1-A and SNRPC/U1-C. Component of the U4/U6-U5 tri-snRNP complex composed of the U4, U6 and U5 snRNAs and at least PRPF3, PRPF4, PRPF6, PRPF8, PRPF31, SNRNP200, TXNL4A, SNRNP40, SNRPB, SNRPD1, SNRPD2, SNRPD3, SNRPE, SNRPF, SNRPG, DDX23, CD2BP2, PPIH, SNU13, EFTUD2, SART1 and USP39, plus LSM2, LSM3, LSM4, LSM5, LSM6, LSM7 and LSM8. Component of the minor spliceosome, which splices U12-type introns. Part of the SMN-Sm complex that contains SMN1, GEMIN2/SIP1, DDX20/GEMIN3, GEMIN4, GEMIN5, GEMIN6, GEMIN7, GEMIN8, STRAP/UNRIP and the Sm proteins SNRPB, SNRPD1, SNRPD2, SNRPD3, SNRPE, SNRPF and SNRPG; catalyzes core snRNPs assembly. Forms a 6S pICln-Sm complex composed of CLNS1A/pICln, SNRPD1, SNRPD2, SNRPE, SNRPF and SNRPG; ring-like structure where CLNS1A/pICln mimics additional Sm proteins and which is unable to assemble into the core snRNP. Interacts with SMN1; the interaction is direct. Interacts with GEMIN2; the interaction is direct. Interacts with SNRPD1; the interaction is direct. Interacts with SNRPF; the interaction is direct.

The protein resides in the cytoplasm. It is found in the cytosol. It localises to the nucleus. In terms of biological role, plays a role in pre-mRNA splicing as a core component of the spliceosomal U1, U2, U4 and U5 small nuclear ribonucleoproteins (snRNPs), the building blocks of the spliceosome. Component of both the pre-catalytic spliceosome B complex and activated spliceosome C complexes. As a component of the minor spliceosome, involved in the splicing of U12-type introns in pre-mRNAs. The sequence is that of Small nuclear ribonucleoprotein Sm D2 (SNRPD2) from Sus scrofa (Pig).